Reading from the N-terminus, the 305-residue chain is UDP-3-O-acyl-N-acetylglucosamine deacetylase (305 aa).

Positions 79, 238, and 242 each coordinate Zn(2+). Catalysis depends on histidine 265, which acts as the Proton donor.

It belongs to the LpxC family. The cofactor is Zn(2+).

It carries out the reaction a UDP-3-O-[(3R)-3-hydroxyacyl]-N-acetyl-alpha-D-glucosamine + H2O = a UDP-3-O-[(3R)-3-hydroxyacyl]-alpha-D-glucosamine + acetate. It functions in the pathway glycolipid biosynthesis; lipid IV(A) biosynthesis; lipid IV(A) from (3R)-3-hydroxytetradecanoyl-[acyl-carrier-protein] and UDP-N-acetyl-alpha-D-glucosamine: step 2/6. In terms of biological role, catalyzes the hydrolysis of UDP-3-O-myristoyl-N-acetylglucosamine to form UDP-3-O-myristoylglucosamine and acetate, the committed step in lipid A biosynthesis. This Aliivibrio fischeri (strain ATCC 700601 / ES114) (Vibrio fischeri) protein is UDP-3-O-acyl-N-acetylglucosamine deacetylase.